Reading from the N-terminus, the 37-residue chain is Large ribosomal subunit protein bL36 (37 aa).

It belongs to the bacterial ribosomal protein bL36 family.

This is Large ribosomal subunit protein bL36 from Shewanella baltica (strain OS223).